The sequence spans 230 residues: Uracil-DNA glycosylase (230 aa).

The Proton acceptor role is filled by Asp-70.

Belongs to the uracil-DNA glycosylase (UDG) superfamily. UNG family.

Its subcellular location is the cytoplasm. It catalyses the reaction Hydrolyzes single-stranded DNA or mismatched double-stranded DNA and polynucleotides, releasing free uracil.. Its function is as follows. Excises uracil residues from the DNA which can arise as a result of misincorporation of dUMP residues by DNA polymerase or due to deamination of cytosine. This chain is Uracil-DNA glycosylase, found in Pseudomonas putida (strain ATCC 700007 / DSM 6899 / JCM 31910 / BCRC 17059 / LMG 24140 / F1).